We begin with the raw amino-acid sequence, 538 residues long: Putative ABC1 protein At2g40090 (538 aa).

The signal sequence occupies residues 1 to 26 (MAARSLWRTRTKLLVVGTALCGGSGA).

Belongs to the protein kinase superfamily. ADCK protein kinase family.

The protein is Putative ABC1 protein At2g40090 of Arabidopsis thaliana (Mouse-ear cress).